The chain runs to 92 residues: UPF0223 protein Sez_0908 (92 aa).

It belongs to the UPF0223 family.

This Streptococcus equi subsp. zooepidemicus (strain MGCS10565) protein is UPF0223 protein Sez_0908.